We begin with the raw amino-acid sequence, 102 residues long: Iron-sulfur cluster assembly protein CyaY (102 aa).

It belongs to the frataxin family.

Functionally, involved in iron-sulfur (Fe-S) cluster assembly. May act as a regulator of Fe-S biogenesis. The chain is Iron-sulfur cluster assembly protein CyaY from Histophilus somni (strain 129Pt) (Haemophilus somnus).